Consider the following 746-residue polypeptide: F-box only protein 30 (746 aa).

Residues 49–110 (EHRLLCPFER…SYSDRKSYES (62 aa)) form a TRAF-type zinc finger. Disordered stretches follow at residues 222-241 (MDEENNKESFQDKNLKDQDH) and 247-266 (IGAVGGVDYSGTSQNAQAEQ). The span at 225–241 (ENNKESFQDKNLKDQDH) shows a compositional bias: basic and acidic residues. Polar residues predominate over residues 256–266 (SGTSQNAQAEQ). Position 383 is a phosphoserine (S383). One can recognise an F-box domain in the interval 611–659 (SDHLSSLPFEVLQHIAGFLDGFSLCQLACVSRLMRDVCGSLLQSRGMVI).

In terms of assembly, part of a SCF (SKP1-cullin-F-box) protein ligase complex. Interacts with SKP1, CUL1 and RBX1/ROC1. In terms of processing, auto-ubiquitinated. Post-translationally, may be neddylated. Neddylation may be required for E3 ligase activity, since it was observed only after purification with o-phenanthroline.

Its pathway is protein modification; protein ubiquitination. Substrate-recognition component of the SCF (SKP1-CUL1-F-box protein)-type E3 ubiquitin ligase complex. Required for muscle atrophy following denervation. The chain is F-box only protein 30 (Fbxo30) from Mus musculus (Mouse).